Consider the following 359-residue polypeptide: Nicotinate-nucleotide--dimethylbenzimidazole phosphoribosyltransferase (359 aa).

The active-site Proton acceptor is the Glu318.

Belongs to the CobT family. In terms of assembly, homodimer.

The catalysed reaction is 5,6-dimethylbenzimidazole + nicotinate beta-D-ribonucleotide = alpha-ribazole 5'-phosphate + nicotinate + H(+). The protein operates within nucleoside biosynthesis; alpha-ribazole biosynthesis; alpha-ribazole from 5,6-dimethylbenzimidazole: step 1/2. Catalyzes the synthesis of alpha-ribazole-5'-phosphate from nicotinate mononucleotide (NAMN) and 5,6-dimethylbenzimidazole (DMB). This chain is Nicotinate-nucleotide--dimethylbenzimidazole phosphoribosyltransferase, found in Escherichia coli O157:H7.